The following is a 305-amino-acid chain: Type II secretion system protein C (305 aa).

Topologically, residues 1–29 (MEFKQLPPLAAWPRLLSQNTLRWQKPISE) are cytoplasmic. Residues 30–50 (GLTLLLLVASAWTLGKMVWVV) form a helical membrane-spanning segment. At 51–305 (SAEQTPVPTW…GQQHDVYIQF (255 aa)) the chain is on the periplasmic side.

It belongs to the GSP C family.

It localises to the cell inner membrane. Involved in a type II secretion system (T2SS, formerly general secretion pathway, GSP) for the export of proteins. Required for secretion of cholera toxin through the outer membrane. This chain is Type II secretion system protein C (epsC), found in Vibrio cholerae serotype O1 (strain ATCC 39315 / El Tor Inaba N16961).